The sequence spans 373 residues: Flagellar P-ring protein (373 aa).

The first 26 residues, 1–26, serve as a signal peptide directing secretion; it reads MKLFFRFLTLVAVLAMSLADVAPAWA.

Belongs to the FlgI family. In terms of assembly, the basal body constitutes a major portion of the flagellar organelle and consists of four rings (L,P,S, and M) mounted on a central rod.

The protein localises to the periplasm. The protein resides in the bacterial flagellum basal body. Its function is as follows. Assembles around the rod to form the L-ring and probably protects the motor/basal body from shearing forces during rotation. The protein is Flagellar P-ring protein of Rhizobium leguminosarum bv. trifolii (strain WSM2304).